Consider the following 708-residue polypeptide: Polyribonucleotide nucleotidyltransferase (708 aa).

The Mg(2+) site is built by Asp-485 and Asp-491. The KH domain occupies Pro-552–Ile-611. In terms of domain architecture, S1 motif spans Gly-621–Lys-689. Positions Lys-689 to Lys-708 are disordered.

This sequence belongs to the polyribonucleotide nucleotidyltransferase family. Mg(2+) is required as a cofactor.

The protein localises to the cytoplasm. The enzyme catalyses RNA(n+1) + phosphate = RNA(n) + a ribonucleoside 5'-diphosphate. Its function is as follows. Involved in mRNA degradation. Catalyzes the phosphorolysis of single-stranded polyribonucleotides processively in the 3'- to 5'-direction. In Clostridium kluyveri (strain NBRC 12016), this protein is Polyribonucleotide nucleotidyltransferase.